A 431-amino-acid chain; its full sequence is MKNKINLRSLAAQAIEQVIEQGQSLSNVLPPLQQKVSDKDKALLQELCFGVLRTLSQLEWLINKLMARPMTGKQRTVHFLIMVGLYQLLYTRIPPHAALAETVEGAVAIKRPQLKGLINGVLRQFQRQQEALLVEFAEHENRYLHPKWLLKRLQQAWPQQWQEIVDANNQRPPMWLRVNRNHHSRDEWLALLKEAGLEGFTHPDYPDAVRLATPAPVHALPGFAEGWVTVQDASAQGCMRYLLPENGERILDLCAAPGGKTTHILEVAPQAQVMAVDIDEQRLSRVYDNLKRLGMKAEVKQGDGRFPEQWCGNEQFDRILLDAPCSATGVIRRHPDIKWLRRDRDIAELAQLQAEILNSTWEHLKPGGTLVYATCSILPEENSQQISAFLARTPDAELHATGTPASPGQQNLPGPEEGDGFFYAKLIKRRN.

S-adenosyl-L-methionine is bound by residues cysteine 254–lysine 260, aspartate 277, aspartate 303, and aspartate 322. Cysteine 375 functions as the Nucleophile in the catalytic mechanism. The disordered stretch occupies residues leucine 398 to glutamate 417. The segment covering threonine 403–leucine 412 has biased composition (polar residues).

It belongs to the class I-like SAM-binding methyltransferase superfamily. RsmB/NOP family.

Its subcellular location is the cytoplasm. It catalyses the reaction cytidine(967) in 16S rRNA + S-adenosyl-L-methionine = 5-methylcytidine(967) in 16S rRNA + S-adenosyl-L-homocysteine + H(+). Specifically methylates the cytosine at position 967 (m5C967) of 16S rRNA. This Klebsiella pneumoniae (strain 342) protein is Ribosomal RNA small subunit methyltransferase B.